Here is a 220-residue protein sequence, read N- to C-terminus: Small ribosomal subunit protein uS3 (220 aa).

In terms of domain architecture, KH type-2 spans I24 to S93.

It belongs to the universal ribosomal protein uS3 family. As to quaternary structure, part of the 30S ribosomal subunit.

Functionally, binds the lower part of the 30S subunit head. The polypeptide is Small ribosomal subunit protein uS3 (Pyrobaculum arsenaticum (strain DSM 13514 / JCM 11321 / PZ6)).